The chain runs to 520 residues: Putative lipase ATG15 (520 aa).

The Cytoplasmic portion of the chain corresponds to 1-14 (MLHKSPSRKRFASP). Residues 15 to 35 (LHLGCILTLTVLCLIAYYFAL) traverse the membrane as a helical; Signal-anchor for type II membrane protein segment. The Lumenal segment spans residues 36–520 (PDYLSVGKSS…WLGFCTKYEL (485 aa)). Asn173, Asn202, and Asn208 each carry an N-linked (GlcNAc...) asparagine glycan. Catalysis depends on Ser332, which acts as the Charge relay system.

It belongs to the AB hydrolase superfamily. Lipase family. As to quaternary structure, binds to both phosphatidylinositol (PI) and phosphatidylinositol 3,5-bisphosphate (PIP2). In terms of processing, glycosylated.

Its subcellular location is the endosome. It localises to the multivesicular body membrane. The protein localises to the prevacuolar compartment membrane. It carries out the reaction a triacylglycerol + H2O = a diacylglycerol + a fatty acid + H(+). Functionally, lipase which is essential for lysis of subvacuolar cytoplasm to vacuole targeted bodies and intravacuolar autophagic bodies. Involved in the lysis of intravacuolar multivesicular body (MVB) vesicles. The intravacuolar membrane disintegration by ATG15 is critical to life span extension. The sequence is that of Putative lipase ATG15 (ATG15) from Saccharomyces cerevisiae (strain ATCC 204508 / S288c) (Baker's yeast).